The chain runs to 664 residues: Type IV inositol polyphosphate 5-phosphatase 3 (664 aa).

Residues G35–K76 form a disordered region. Residues Y40–G66 are compositionally biased toward acidic residues. 2 catalytic regions span residues E514–S529 and P592–K607.

Belongs to the inositol polyphosphate 5-phosphatase family.

The catalysed reaction is a 1,2-diacyl-sn-glycero-3-phospho-(1D-myo-inositol-4,5-bisphosphate) + H2O = a 1,2-diacyl-sn-glycero-3-phospho-(1D-myo-inositol 4-phosphate) + phosphate. It catalyses the reaction a 1,2-diacyl-sn-glycero-3-phospho-(1D-myo-inositol-3,4,5-trisphosphate) + H2O = a 1,2-diacyl-sn-glycero-3-phospho-(1D-myo-inositol-3,4-bisphosphate) + phosphate. Functionally, has phosphatase activity toward PtdIns(4,5)P2 and PtdIns(3,4,5)P3. This chain is Type IV inositol polyphosphate 5-phosphatase 3, found in Arabidopsis thaliana (Mouse-ear cress).